Here is a 423-residue protein sequence, read N- to C-terminus: Serine--tRNA ligase (423 aa).

229–231 (TAE) is an L-serine binding site. 260–262 (RKE) lines the ATP pocket. Glu283 provides a ligand contact to L-serine. Position 347–350 (347–350 (EISS)) interacts with ATP. L-serine is bound at residue Ser383.

It belongs to the class-II aminoacyl-tRNA synthetase family. Type-1 seryl-tRNA synthetase subfamily. Homodimer. The tRNA molecule binds across the dimer.

Its subcellular location is the cytoplasm. The enzyme catalyses tRNA(Ser) + L-serine + ATP = L-seryl-tRNA(Ser) + AMP + diphosphate + H(+). The catalysed reaction is tRNA(Sec) + L-serine + ATP = L-seryl-tRNA(Sec) + AMP + diphosphate + H(+). It participates in aminoacyl-tRNA biosynthesis; selenocysteinyl-tRNA(Sec) biosynthesis; L-seryl-tRNA(Sec) from L-serine and tRNA(Sec): step 1/1. Functionally, catalyzes the attachment of serine to tRNA(Ser). Is also able to aminoacylate tRNA(Sec) with serine, to form the misacylated tRNA L-seryl-tRNA(Sec), which will be further converted into selenocysteinyl-tRNA(Sec). The polypeptide is Serine--tRNA ligase (Syntrophotalea carbinolica (strain DSM 2380 / NBRC 103641 / GraBd1) (Pelobacter carbinolicus)).